Consider the following 208-residue polypeptide: Large ribosomal subunit protein bL9 (208 aa).

The tract at residues 168–208 (GKVEKGSCTEGESLELGSVDNDINSGNVDSNESEKQDSVSE) is disordered. Positions 188–197 (NDINSGNVDS) are enriched in polar residues. Residues 199 to 208 (ESEKQDSVSE) show a composition bias toward basic and acidic residues.

Belongs to the bacterial ribosomal protein bL9 family.

Binds to the 23S rRNA. This chain is Large ribosomal subunit protein bL9, found in Ehrlichia chaffeensis (strain ATCC CRL-10679 / Arkansas).